The following is a 677-amino-acid chain: mRNA 3'-end-processing protein RNA14 (677 aa).

HAT repeat units lie at residues glutamate 56–alanine 88, aspartate 90–arginine 124, valine 138–glutamine 170, glutamine 181–glutamate 214, arginine 257–glutamate 289, and methionine 298–glutamate 330.

Component of the CFIA complex, which is composed of RNA14, RNA15, PCF11 and CLP1. Interacts with FIP1, PFS2, YSH1 and probably also with RNA15. Probably interacts with the phosphorylated CTD domain of RPB1/RNA polymerase II.

It is found in the nucleus. Its subcellular location is the cytoplasm. Its function is as follows. Component of the cleavage factor IA (CFIA) complex, which is involved in the endonucleolytic cleavage during polyadenylation-dependent pre-mRNA 3'-end formation and cooperates with the cleavage factor NAB4/CFIB and the cleavage and polyadenylation factor (CPF) complex. The protein is mRNA 3'-end-processing protein RNA14 (RNA14) of Saccharomyces cerevisiae (strain ATCC 204508 / S288c) (Baker's yeast).